The following is a 157-amino-acid chain: Endoribonuclease YbeY (157 aa).

The Zn(2+) site is built by histidine 115, histidine 119, and histidine 125.

It belongs to the endoribonuclease YbeY family. It depends on Zn(2+) as a cofactor.

It is found in the cytoplasm. In terms of biological role, single strand-specific metallo-endoribonuclease involved in late-stage 70S ribosome quality control and in maturation of the 3' terminus of the 16S rRNA. This is Endoribonuclease YbeY from Micrococcus luteus (strain ATCC 4698 / DSM 20030 / JCM 1464 / CCM 169 / CCUG 5858 / IAM 1056 / NBRC 3333 / NCIMB 9278 / NCTC 2665 / VKM Ac-2230) (Micrococcus lysodeikticus).